The sequence spans 233 residues: DNA repair protein RecO (233 aa).

The protein belongs to the RecO family.

Functionally, involved in DNA repair and RecF pathway recombination. The polypeptide is DNA repair protein RecO (Pseudomonas aeruginosa (strain UCBPP-PA14)).